A 126-amino-acid chain; its full sequence is Plastocyanin (126 aa).

The first 28 residues, 1–28, serve as a signal peptide directing secretion; the sequence is MSKKFLTILAGLLLVVSSFFLSVSPAAA. A Plastocyanin-like domain is found at 29–126; that stretch reads ANATVKMGSD…AGMVGKVVVE (98 aa). H67, C111, H114, and M119 together coordinate Cu cation.

The protein belongs to the plastocyanin family. It depends on Cu(2+) as a cofactor.

The protein resides in the cellular thylakoid membrane. Its function is as follows. Participates in electron transfer between P700 and the cytochrome b6-f complex in photosystem I. The sequence is that of Plastocyanin (petE) from Synechocystis sp. (strain ATCC 27184 / PCC 6803 / Kazusa).